A 233-amino-acid chain; its full sequence is 7-cyano-7-deazaguanine synthase (233 aa).

Residue 7–17 (LSGGLDSAVTS) coordinates ATP. Residues C195, C206, C209, and C212 each contribute to the Zn(2+) site.

This sequence belongs to the QueC family. Zn(2+) is required as a cofactor.

It carries out the reaction 7-carboxy-7-deazaguanine + NH4(+) + ATP = 7-cyano-7-deazaguanine + ADP + phosphate + H2O + H(+). It participates in purine metabolism; 7-cyano-7-deazaguanine biosynthesis. Its function is as follows. Catalyzes the ATP-dependent conversion of 7-carboxy-7-deazaguanine (CDG) to 7-cyano-7-deazaguanine (preQ(0)). This Methanococcus maripaludis (strain C7 / ATCC BAA-1331) protein is 7-cyano-7-deazaguanine synthase.